Here is a 110-residue protein sequence, read N- to C-terminus: uncharacterized protein (110 aa).

The signal sequence occupies residues M1–T23.

This is an uncharacterized protein from Bacillus subtilis (strain 168).